Here is a 317-residue protein sequence, read N- to C-terminus: Zinc metalloproteinase/disintegrin (317 aa).

Positions 1–26 (EAPKMCGVTQNWESYEPIKKASQSNL) are excised as a propeptide. A Peptidase M12B domain is found at 32-228 (RYIELVIVAD…QKPQCILNKP (197 aa)). Ca(2+) contacts are provided by Glu35 and Asp119. 3 cysteine pairs are disulfide-bonded: Cys143–Cys223, Cys183–Cys207, and Cys185–Cys190. Position 168 (His168) interacts with Zn(2+). Residue Glu169 is part of the active site. Zn(2+) is bound by residues His172 and His178. Ca(2+)-binding residues include Cys223 and Asn226. Residues 229–244 (LRTDTVSTPVSGNELL) constitute a propeptide that is removed on maturation. One can recognise a Disintegrin domain in the interval 236–317 (TPVSGNELLE…AGCPRNPFHA (82 aa)). 6 disulfides stabilise this stretch: Cys250–Cys259, Cys252–Cys260, Cys265–Cys279, Cys273–Cys303, Cys278–Cys282, and Cys291–Cys310. The short motif at 295 to 297 (RGD) is the Cell attachment site element.

The protein belongs to the venom metalloproteinase (M12B) family. P-II subfamily. P-IIa sub-subfamily. As to quaternary structure, monomer. Requires Zn(2+) as cofactor. As to expression, expressed by the venom gland.

It localises to the secreted. Its function is as follows. metalloproteinase that impairs hemostasis in the envenomed animal. Functionally, inhibits GPIIb/GPIIIa (ITGA2B/ITGB3) binding to immobilized fibrinogen with an IC(50) of 2.2 nM and ADP-induced platelet aggregation with an IC(50) of 131 nM, respectively. Inhibits angiogenesis. By binding to vitronectin receptor (alpha-V/beta-3 (ITGAV/ITGB3)), also induces apoptosis of endothelial cells by blocking their attachment to extracellular matrix proteins. Inhibits platelet aggregation induced by ADP (IC(50) is 30 nM), collagen (IC(50) is 500 nM), thrombin and epinephrin (IC(50) is 160 nM). This is Zinc metalloproteinase/disintegrin from Gloydius brevicauda (Korean slamosa snake).